The following is a 335-amino-acid chain: Transcriptional activator NphR (335 aa).

The HTH araC/xylS-type domain occupies 231 to 329 (TRVQRVIEQN…GSSPGLYRKE (99 aa)). 2 consecutive DNA-binding regions (H-T-H motif) follow at residues 249–270 (SDIAAAAGMSLRTVHKLFNAEG) and 296–319 (VADVSECAGFRDVSHFSRLFRSTF).

Its function is as follows. Transcriptional activator of nphA1 and nphA2 involved in the degradation of 4-nitrophenol (4-NP). The polypeptide is Transcriptional activator NphR (nphR) (Rhodococcus sp).